The following is a 50-amino-acid chain: Basic phospholipase A2 Bmaj-9 (50 aa).

3 residues coordinate Ca(2+): Tyr-27, Gly-29, and Gly-31. Cys-28 and Cys-45 are disulfide-bonded. His-48 is a catalytic residue. Position 49 (Asp-49) interacts with Ca(2+).

It belongs to the phospholipase A2 family. Group II subfamily. D49 sub-subfamily. It depends on Ca(2+) as a cofactor. In terms of tissue distribution, expressed by the venom gland.

It localises to the secreted. The catalysed reaction is a 1,2-diacyl-sn-glycero-3-phosphocholine + H2O = a 1-acyl-sn-glycero-3-phosphocholine + a fatty acid + H(+). Snake venom phospholipase A2 (PLA2) that causes irreversible neuromuscular blockade in chick biventer cervicis muscle preparations. The neuromuscular blockade is mediated by inhibitory action at the presynaptic motor nerve endings. PLA2 catalyzes the calcium-dependent hydrolysis of the 2-acyl groups in 3-sn-phosphoglycerides. The sequence is that of Basic phospholipase A2 Bmaj-9 from Bothrops marajoensis (Marajo lancehead).